A 122-amino-acid polypeptide reads, in one-letter code: Large ribosomal subunit protein bL12 (122 aa).

Belongs to the bacterial ribosomal protein bL12 family. As to quaternary structure, homodimer. Part of the ribosomal stalk of the 50S ribosomal subunit. Forms a multimeric L10(L12)X complex, where L10 forms an elongated spine to which 2 to 4 L12 dimers bind in a sequential fashion. Binds GTP-bound translation factors.

In terms of biological role, forms part of the ribosomal stalk which helps the ribosome interact with GTP-bound translation factors. Is thus essential for accurate translation. The polypeptide is Large ribosomal subunit protein bL12 (Yersinia enterocolitica serotype O:8 / biotype 1B (strain NCTC 13174 / 8081)).